A 396-amino-acid chain; its full sequence is Na(+)/H(+) antiporter NhaA (396 aa).

Helical transmembrane passes span 17-37, 59-79, 97-117, 127-147, 156-176, 181-201, 206-226, 260-280, 292-312, 333-353, and 368-388; these read FSGLLLILFCFLAIFISNTNF, FSLTNIVNDILMTFFFLEIGI, ILPGIAAIGGMIFPALIYNFI, GWAITVATDIAFAVGVLKILG, IFLLSLAIFDDIGAILIIAFF, IDQYMILLSTLVILTILSINY, CIYIYIIFGILLWESIFLSGI, SLSFLNKYFILPIFAFFNSGI, LLPFGIFFGLVLGKPIGVFLF, IAGISFLCGIGFTMSIFISNL, and FSILISSIVSSVIGFLFLYFL.

Belongs to the NhaA Na(+)/H(+) (TC 2.A.33) antiporter family.

It is found in the cell membrane. The catalysed reaction is Na(+)(in) + 2 H(+)(out) = Na(+)(out) + 2 H(+)(in). Its function is as follows. Na(+)/H(+) antiporter that extrudes sodium in exchange for external protons. The sequence is that of Na(+)/H(+) antiporter NhaA from Wigglesworthia glossinidia brevipalpis.